The primary structure comprises 163 residues: uncharacterized protein (163 aa).

Positions 7–162 (ISISAVKLPQ…NVVYMRLEMS (156 aa)) constitute an N-acetyltransferase domain.

It belongs to the acetyltransferase family.

It localises to the cytoplasm. Its subcellular location is the nucleus. This is an uncharacterized protein from Schizosaccharomyces pombe (strain 972 / ATCC 24843) (Fission yeast).